Here is a 435-residue protein sequence, read N- to C-terminus: Putative F-box/kelch-repeat protein At1g13200 (435 aa).

The tract at residues 1–29 (MKDAEKREVIASSSLQRKRNRGRRLRKRR) is disordered. The span at 16-29 (QRKRNRGRRLRKRR) shows a compositional bias: basic residues. The region spanning 37-82 (LMVPSSLPNDVLEEIFLRFPVKALIRLKSLSKQWRSTIESRSFEER) is the F-box domain. Kelch repeat units lie at residues 164–217 (SVYV…DYKL), 224–270 (DKYI…PASA), 273–317 (SVYW…HIDM), and 322–368 (NSLC…EKRD).

This is Putative F-box/kelch-repeat protein At1g13200 from Arabidopsis thaliana (Mouse-ear cress).